Consider the following 264-residue polypeptide: MGRLTLTKLQKMKRQGEKITMLTAYDASFAALLEAAGVEVLLVGDSLGMVIQGQESTLSVTMDDMVYHCRNVSRGSQCTFILSDMPFMSYATPNQAMDNAARLMREGGAQMVKLEGGRLLGEIVEHLTARGIPVCAHLGLLPQSVHRIGGYRVQGREEISARRIQEDAMILQEAGADMLILECVPARLGSKITDALKIPVISCGAGPYCDGQVLVLYDMLGISPGKSPSFSRNFLEGTSNIPNAIQAYVSAVKKNEFPLLELSY.

Mg(2+) contacts are provided by D45 and D84. Residues 45 to 46 (DS), D84, and K113 contribute to the 3-methyl-2-oxobutanoate site. E115 provides a ligand contact to Mg(2+). E182 functions as the Proton acceptor in the catalytic mechanism.

Belongs to the PanB family. Homodecamer; pentamer of dimers. It depends on Mg(2+) as a cofactor.

It localises to the cytoplasm. The catalysed reaction is 3-methyl-2-oxobutanoate + (6R)-5,10-methylene-5,6,7,8-tetrahydrofolate + H2O = 2-dehydropantoate + (6S)-5,6,7,8-tetrahydrofolate. It participates in cofactor biosynthesis; (R)-pantothenate biosynthesis; (R)-pantoate from 3-methyl-2-oxobutanoate: step 1/2. In terms of biological role, catalyzes the reversible reaction in which hydroxymethyl group from 5,10-methylenetetrahydrofolate is transferred onto alpha-ketoisovalerate to form ketopantoate. In Nitrosococcus oceani (strain ATCC 19707 / BCRC 17464 / JCM 30415 / NCIMB 11848 / C-107), this protein is 3-methyl-2-oxobutanoate hydroxymethyltransferase.